A 129-amino-acid polypeptide reads, in one-letter code: uncharacterized protein (129 aa).

A disordered region spans residues 1 to 129 (MWLWQDIQCC…HTSNGRTGDL (129 aa)). Residues 87-100 (KGADTRRLPRETRP) are compositionally biased toward basic and acidic residues. Polar residues predominate over residues 119–129 (PHTSNGRTGDL).

This is an uncharacterized protein from Homo sapiens (Human).